We begin with the raw amino-acid sequence, 517 residues long: Aspartyl/glutamyl-tRNA(Asn/Gln) amidotransferase subunit B (517 aa).

It belongs to the GatB/GatE family. GatB subfamily. In terms of assembly, heterotrimer of A, B and C subunits.

It carries out the reaction L-glutamyl-tRNA(Gln) + L-glutamine + ATP + H2O = L-glutaminyl-tRNA(Gln) + L-glutamate + ADP + phosphate + H(+). The enzyme catalyses L-aspartyl-tRNA(Asn) + L-glutamine + ATP + H2O = L-asparaginyl-tRNA(Asn) + L-glutamate + ADP + phosphate + 2 H(+). Its function is as follows. Allows the formation of correctly charged Asn-tRNA(Asn) or Gln-tRNA(Gln) through the transamidation of misacylated Asp-tRNA(Asn) or Glu-tRNA(Gln) in organisms which lack either or both of asparaginyl-tRNA or glutaminyl-tRNA synthetases. The reaction takes place in the presence of glutamine and ATP through an activated phospho-Asp-tRNA(Asn) or phospho-Glu-tRNA(Gln). The sequence is that of Aspartyl/glutamyl-tRNA(Asn/Gln) amidotransferase subunit B from Thermobifida fusca (strain YX).